We begin with the raw amino-acid sequence, 508 residues long: Catalase (508 aa).

The signal sequence occupies residues 1–21 (MHMSKSFLLISMGLASISVHA). Active-site residues include His-72 and Asn-145. Tyr-353 serves as a coordination point for heme. Polar residues predominate over residues 373 to 392 (PKSPVANHNQDGPSNNSTGL). The interval 373-396 (PKSPVANHNQDGPSNNSTGLGNVD) is disordered.

Belongs to the catalase family. The cofactor is heme.

It localises to the periplasm. It carries out the reaction 2 H2O2 = O2 + 2 H2O. In terms of biological role, decomposes hydrogen peroxide into water and oxygen; serves to protect cells from the toxic effects of hydrogen peroxide. This chain is Catalase, found in Vibrio vulnificus (strain CMCP6).